Here is a 278-residue protein sequence, read N- to C-terminus: MPSASTISVISAISGVAVLGALLTATIIFNDINRFYYETMETFDEFKINEKNAWDTMVMSTRSPKEMLLGRARRQAALPDCQALAKNCPPGPPGPPGAPGAAGEPGVDGDAGAAGIDGVAIQFASAAGGACIQCPAGEAGPAGAPGAPGPAGPDGQPGADGQGGAPGPAGPEGPAGDAGAPGAPGAPGNDGQPGQNGQRSTGTPGAAGAPGPQGPVGSDGQPGSAGAPGAPGPAGAPGVDGQPGANGQPGPDGEQGHDGQPGPDAAYCPCPARSSVRQ.

Disordered regions lie at residues 84-109 (LAKN…GVDG) and 140-278 (GPAG…SVRQ). Positions 89-98 (PPGPPGPPGA) are enriched in pro residues. Triple-helical region stretches follow at residues 91-120 (GPPG…DGVA), 137-199 (GEAG…NGQR), and 202-264 (GTPG…PGPD). Over residues 99–109 (PGAAGEPGVDG) the composition is skewed to low complexity. Gly residues predominate over residues 158–167 (GADGQGGAPG). Low complexity-rich tracts occupy residues 172-228 (EGPA…AGAP) and 236-245 (APGVDGQPGA).

The protein belongs to the cuticular collagen family. As to quaternary structure, collagen polypeptide chains are complexed within the cuticle by disulfide bonds and other types of covalent cross-links.

Its function is as follows. Nematode cuticles are composed largely of collagen-like proteins. The cuticle functions both as an exoskeleton and as a barrier to protect the worm from its environment. This Caenorhabditis elegans protein is Putative cuticle collagen 91 (col-91).